We begin with the raw amino-acid sequence, 224 residues long: Putative ribonuclease Z (224 aa).

Positions 120 and 184 each coordinate Zn(2+).

This sequence belongs to the RNase Z family. Homodimer. Zn(2+) is required as a cofactor.

The catalysed reaction is Endonucleolytic cleavage of RNA, removing extra 3' nucleotides from tRNA precursor, generating 3' termini of tRNAs. A 3'-hydroxy group is left at the tRNA terminus and a 5'-phosphoryl group is left at the trailer molecule.. Zinc phosphodiesterase, which displays some tRNA 3'-processing endonuclease activity. Probably involved in tRNA maturation, by removing a 3'-trailer from precursor tRNA. The polypeptide is Putative ribonuclease Z (rnz) (Mycobacterium tuberculosis (strain CDC 1551 / Oshkosh)).